A 216-amino-acid chain; its full sequence is Sporozoite antigen (216 aa).

Residues Gln-194–Trp-216 form a disordered region.

The sequence is that of Sporozoite antigen from Eimeria tenella (Coccidian parasite).